The sequence spans 86 residues: Cell division topological specificity factor (86 aa).

Belongs to the MinE family.

Prevents the cell division inhibition by proteins MinC and MinD at internal division sites while permitting inhibition at polar sites. This ensures cell division at the proper site by restricting the formation of a division septum at the midpoint of the long axis of the cell. The protein is Cell division topological specificity factor of Azoarcus sp. (strain BH72).